Here is a 155-residue protein sequence, read N- to C-terminus: S-ribosylhomocysteine lyase (155 aa).

Fe cation-binding residues include histidine 58, histidine 62, and cysteine 125.

This sequence belongs to the LuxS family. Homodimer. Fe cation is required as a cofactor.

It carries out the reaction S-(5-deoxy-D-ribos-5-yl)-L-homocysteine = (S)-4,5-dihydroxypentane-2,3-dione + L-homocysteine. Its function is as follows. Involved in the synthesis of autoinducer 2 (AI-2) which is secreted by bacteria and is used to communicate both the cell density and the metabolic potential of the environment. The regulation of gene expression in response to changes in cell density is called quorum sensing. Catalyzes the transformation of S-ribosylhomocysteine (RHC) to homocysteine (HC) and 4,5-dihydroxy-2,3-pentadione (DPD). In Helicobacter pylori (strain P12), this protein is S-ribosylhomocysteine lyase.